The sequence spans 349 residues: Protein-glutamate methylesterase/protein-glutamine glutaminase (349 aa).

In terms of domain architecture, Response regulatory spans 5-122; sequence RVLSVDDSAL…REGMLAYSEM (118 aa). 4-aspartylphosphate is present on Asp56. The CheB-type methylesterase domain maps to 152–344; it reads LLSSEKLIAI…QQMLATISAG (193 aa). Catalysis depends on residues Ser164, His190, and Asp286.

It belongs to the CheB family. Post-translationally, phosphorylated by CheA. Phosphorylation of the N-terminal regulatory domain activates the methylesterase activity.

The protein resides in the cytoplasm. The enzyme catalyses [protein]-L-glutamate 5-O-methyl ester + H2O = L-glutamyl-[protein] + methanol + H(+). The catalysed reaction is L-glutaminyl-[protein] + H2O = L-glutamyl-[protein] + NH4(+). Functionally, involved in chemotaxis. Part of a chemotaxis signal transduction system that modulates chemotaxis in response to various stimuli. Catalyzes the demethylation of specific methylglutamate residues introduced into the chemoreceptors (methyl-accepting chemotaxis proteins or MCP) by CheR. Also mediates the irreversible deamidation of specific glutamine residues to glutamic acid. This Shigella flexneri protein is Protein-glutamate methylesterase/protein-glutamine glutaminase.